The chain runs to 239 residues: Mannose-P-dolichol utilization defect 1 protein homolog 1 (239 aa).

The next 6 helical transmembrane spans lie at 25-45 (CLLP…SMTV), 62-82 (LSVV…AYCL), 91-111 (FGEL…IYYF), 123-143 (AILY…PFLF), 174-194 (LSFL…FTSI), and 202-222 (MLLG…QILL). The PQ-loop 1 domain occupies 27–93 (LPLISKLLGY…KDLPFSAFGE (67 aa)). The region spanning 150-205 (KHLIFLSARIPQIWKNFRNKSTGQLSFLTCLMNFGGALARVFTSIQEKAPLSMLLG) is the PQ-loop 2 domain.

Belongs to the MPDU1 (TC 2.A.43.3) family.

It localises to the membrane. This Arabidopsis thaliana (Mouse-ear cress) protein is Mannose-P-dolichol utilization defect 1 protein homolog 1.